Here is a 122-residue protein sequence, read N- to C-terminus: Small ribosomal subunit protein uS13 (122 aa).

The segment at 97-122 (PVRGQRTHTNARTRKGPAKAIAGKKK) is disordered.

Belongs to the universal ribosomal protein uS13 family. Part of the 30S ribosomal subunit. Forms a loose heterodimer with protein S19. Forms two bridges to the 50S subunit in the 70S ribosome.

Its function is as follows. Located at the top of the head of the 30S subunit, it contacts several helices of the 16S rRNA. In the 70S ribosome it contacts the 23S rRNA (bridge B1a) and protein L5 of the 50S subunit (bridge B1b), connecting the 2 subunits; these bridges are implicated in subunit movement. Contacts the tRNAs in the A and P-sites. The protein is Small ribosomal subunit protein uS13 of Bartonella henselae (strain ATCC 49882 / DSM 28221 / CCUG 30454 / Houston 1) (Rochalimaea henselae).